Reading from the N-terminus, the 256-residue chain is Fumarate reductase iron-sulfur subunit (256 aa).

One can recognise a 2Fe-2S ferredoxin-type domain in the interval 7–97; the sequence is MNVEVLRYNP…HMRIEPLANF (91 aa). Tyrosine 14 lines the a menaquinone pocket. The [2Fe-2S] cluster site is built by cysteine 58, cysteine 63, cysteine 66, and cysteine 78. The region spanning 151–180 is the 4Fe-4S ferredoxin-type domain; it reads LEKYRQFSMCINCGLCYAACPQFGLNPEFL. Positions 160, 163, and 166 each coordinate [4Fe-4S] cluster. Positions 170, 216, and 222 each coordinate [3Fe-4S] cluster. Residue cysteine 226 participates in [4Fe-4S] cluster binding. 237–240 lines the a menaquinone pocket; sequence NQGK.

The protein belongs to the succinate dehydrogenase/fumarate reductase iron-sulfur protein family. In terms of assembly, fumarate dehydrogenase forms part of an enzyme complex containing four subunits: a flavoprotein, an iron-sulfur, and two hydrophobic anchor proteins. [2Fe-2S] cluster serves as cofactor. Requires [3Fe-4S] cluster as cofactor. [4Fe-4S] cluster is required as a cofactor.

Its subcellular location is the cell inner membrane. The enzyme catalyses a quinone + succinate = fumarate + a quinol. It catalyses the reaction a menaquinone + succinate = a menaquinol + fumarate. The sequence is that of Fumarate reductase iron-sulfur subunit (frdB) from Haemophilus influenzae (strain ATCC 51907 / DSM 11121 / KW20 / Rd).